The following is a 425-amino-acid chain: Serine--tRNA ligase (425 aa).

231–233 (TAE) contacts L-serine. ATP is bound at residue 262–264 (RRE). Residue E285 participates in L-serine binding. ATP is bound at residue 349-352 (EISS). An L-serine-binding site is contributed by S385.

The protein belongs to the class-II aminoacyl-tRNA synthetase family. Type-1 seryl-tRNA synthetase subfamily. In terms of assembly, homodimer. The tRNA molecule binds across the dimer.

The protein localises to the cytoplasm. It carries out the reaction tRNA(Ser) + L-serine + ATP = L-seryl-tRNA(Ser) + AMP + diphosphate + H(+). The catalysed reaction is tRNA(Sec) + L-serine + ATP = L-seryl-tRNA(Sec) + AMP + diphosphate + H(+). Its pathway is aminoacyl-tRNA biosynthesis; selenocysteinyl-tRNA(Sec) biosynthesis; L-seryl-tRNA(Sec) from L-serine and tRNA(Sec): step 1/1. Catalyzes the attachment of serine to tRNA(Ser). Is also able to aminoacylate tRNA(Sec) with serine, to form the misacylated tRNA L-seryl-tRNA(Sec), which will be further converted into selenocysteinyl-tRNA(Sec). The sequence is that of Serine--tRNA ligase from Aquifex aeolicus (strain VF5).